Here is a 100-residue protein sequence, read N- to C-terminus: Urease subunit gamma (100 aa).

Belongs to the urease gamma subunit family. Heterotrimer of UreA (gamma), UreB (beta) and UreC (alpha) subunits. Three heterotrimers associate to form the active enzyme.

The protein resides in the cytoplasm. The catalysed reaction is urea + 2 H2O + H(+) = hydrogencarbonate + 2 NH4(+). Its pathway is nitrogen metabolism; urea degradation; CO(2) and NH(3) from urea (urease route): step 1/1. The polypeptide is Urease subunit gamma (Acinetobacter baylyi (strain ATCC 33305 / BD413 / ADP1)).